The following is a 205-amino-acid chain: Proteasome subunit beta type-3 (205 aa).

This sequence belongs to the peptidase T1B family. In terms of assembly, the 26S proteasome consists of a 20S proteasome core and two 19S regulatory subunits. The 20S proteasome core is composed of 28 subunits that are arranged in four stacked rings, resulting in a barrel-shaped structure. The two end rings are each formed by seven alpha subunits, and the two central rings are each formed by seven beta subunits. The catalytic chamber with the active sites is on the inside of the barrel.

The protein localises to the cytoplasm. It localises to the nucleus. Functionally, non-catalytic component of the proteasome, a multicatalytic proteinase complex which is characterized by its ability to cleave peptides with Arg, Phe, Tyr, Leu, and Glu adjacent to the leaving group at neutral or slightly basic pH. The proteasome has an ATP-dependent proteolytic activity. The sequence is that of Proteasome subunit beta type-3 (psmB3) from Dictyostelium discoideum (Social amoeba).